We begin with the raw amino-acid sequence, 334 residues long: Malate dehydrogenase (334 aa).

NAD(+) is bound at residue 17–23 (GAAGQIG). The substrate site is built by arginine 98 and arginine 104. Residues asparagine 111, glutamine 118, and 135 to 137 (VGN) each bind NAD(+). Substrate-binding residues include asparagine 137 and arginine 168. The Proton acceptor role is filled by histidine 193.

It belongs to the LDH/MDH superfamily. MDH type 2 family.

The catalysed reaction is (S)-malate + NAD(+) = oxaloacetate + NADH + H(+). Its function is as follows. Catalyzes the reversible oxidation of malate to oxaloacetate. This Deinococcus geothermalis (strain DSM 11300 / CIP 105573 / AG-3a) protein is Malate dehydrogenase.